A 92-amino-acid polypeptide reads, in one-letter code: Small ribosomal subunit protein uS19 (92 aa).

The protein belongs to the universal ribosomal protein uS19 family.

Protein S19 forms a complex with S13 that binds strongly to the 16S ribosomal RNA. The chain is Small ribosomal subunit protein uS19 from Acaryochloris marina (strain MBIC 11017).